Reading from the N-terminus, the 85-residue chain is Large ribosomal subunit protein bL27 (85 aa).

The tract at residues 1–20 (MAHKKAAGSSRNGRDSNPKM) is disordered.

The protein belongs to the bacterial ribosomal protein bL27 family.

This chain is Large ribosomal subunit protein bL27, found in Psychrobacter arcticus (strain DSM 17307 / VKM B-2377 / 273-4).